A 364-amino-acid polypeptide reads, in one-letter code: Urease accessory protein UreD (364 aa).

Disordered stretches follow at residues 1–37 (MDQD…SSPA) and 201–250 (PPEV…AGER). 3 stretches are compositionally biased toward low complexity: residues 21-37 (AGSA…SSPA), 209-218 (APDRGAPAAE), and 236-248 (AASS…APAG).

The protein belongs to the UreD family. In terms of assembly, ureD, UreF and UreG form a complex that acts as a GTP-hydrolysis-dependent molecular chaperone, activating the urease apoprotein by helping to assemble the nickel containing metallocenter of UreC. The UreE protein probably delivers the nickel.

It is found in the cytoplasm. In terms of biological role, required for maturation of urease via the functional incorporation of the urease nickel metallocenter. This Kocuria rhizophila (strain ATCC 9341 / DSM 348 / NBRC 103217 / DC2201) protein is Urease accessory protein UreD.